We begin with the raw amino-acid sequence, 213 residues long: Inactive ribonuclease-like protein 10 (213 aa).

Residues 1–24 (MKLTLVQIFFMMLLLLLGLGMGLG) form the signal peptide. Asn131 is a glycosylation site (N-linked (GlcNAc...) asparagine).

Belongs to the pancreatic ribonuclease family. Post-translationally, the N-terminus is blocked. Glycosylated. As to expression, male-specific expression in proximal caput of the epididymis.

The protein localises to the secreted. Functionally, secreted proximal epididymal protein required for post-testicular sperm maturation and male fertility. May be involved in sperm adhesion to the egg zona pellucida. Does not have ribonuclease activity. The polypeptide is Inactive ribonuclease-like protein 10 (RNASE10) (Equus caballus (Horse)).